Reading from the N-terminus, the 386-residue chain is Lipoyl synthase, mitochondrial (386 aa).

Positions 1–48 (MHGRRHLAASLTRALTQAPSRSISSTPSLLQTLDPSVPSPSPPPAAEP) are disordered. Residues 13–34 (RALTQAPSRSISSTPSLLQTLD) are compositionally biased toward polar residues. Pro residues predominate over residues 37 to 46 (VPSPSPPPAA). The [4Fe-4S] cluster site is built by Cys113, Cys118, Cys124, Cys144, Cys148, Cys151, and Ser360. The Radical SAM core domain maps to 129-349 (ETGTATATIM…RALGVEMGFR (221 aa)).

It belongs to the radical SAM superfamily. Lipoyl synthase family. [4Fe-4S] cluster serves as cofactor.

It is found in the mitochondrion. It catalyses the reaction [[Fe-S] cluster scaffold protein carrying a second [4Fe-4S](2+) cluster] + N(6)-octanoyl-L-lysyl-[protein] + 2 oxidized [2Fe-2S]-[ferredoxin] + 2 S-adenosyl-L-methionine + 4 H(+) = [[Fe-S] cluster scaffold protein] + N(6)-[(R)-dihydrolipoyl]-L-lysyl-[protein] + 4 Fe(3+) + 2 hydrogen sulfide + 2 5'-deoxyadenosine + 2 L-methionine + 2 reduced [2Fe-2S]-[ferredoxin]. It functions in the pathway protein modification; protein lipoylation via endogenous pathway; protein N(6)-(lipoyl)lysine from octanoyl-[acyl-carrier-protein]: step 2/2. In terms of biological role, catalyzes the radical-mediated insertion of two sulfur atoms into the C-6 and C-8 positions of the octanoyl moiety bound to the lipoyl domains of lipoate-dependent enzymes, thereby converting the octanoylated domains into lipoylated derivatives. The protein is Lipoyl synthase, mitochondrial of Sorghum bicolor (Sorghum).